The primary structure comprises 504 residues: Maturase K (504 aa).

The protein belongs to the intron maturase 2 family. MatK subfamily.

It localises to the plastid. Its subcellular location is the chloroplast. Its function is as follows. Usually encoded in the trnK tRNA gene intron. Probably assists in splicing its own and other chloroplast group II introns. This chain is Maturase K, found in Nepenthes alata (Winged pitcher plant).